Consider the following 102-residue polypeptide: 10 kDa heat shock protein, mitochondrial (102 aa).

Position 2 is an N-acetylalanine (A2). An N6-acetyllysine modification is found at K8. The residue at position 28 (K28) is an N6-succinyllysine. K40 is subject to N6-acetyllysine; alternate. K40, K54, and K56 each carry N6-malonyllysine; alternate. Residues K40, K54, K56, K66, and K70 each carry the N6-succinyllysine; alternate modification. Residues K56, K66, and K70 each carry the N6-acetyllysine; alternate modification. Residue T79 is modified to Phosphothreonine. N6-acetyllysine; alternate is present on residues K80 and K86. N6-succinyllysine; alternate occurs at positions 80 and 86. K99 carries the post-translational modification N6-acetyllysine.

This sequence belongs to the GroES chaperonin family. As to quaternary structure, homoheptamer arranged in a ring structure. 2 heptameric Hsp10 rings interact with a Hsp60 tetradecamer in the structure of a back-to-back double heptameric ring to form the symmetrical football complex.

It is found in the mitochondrion matrix. Co-chaperonin implicated in mitochondrial protein import and macromolecular assembly. Together with Hsp60, facilitates the correct folding of imported proteins. May also prevent misfolding and promote the refolding and proper assembly of unfolded polypeptides generated under stress conditions in the mitochondrial matrix. The functional units of these chaperonins consist of heptameric rings of the large subunit Hsp60, which function as a back-to-back double ring. In a cyclic reaction, Hsp60 ring complexes bind one unfolded substrate protein per ring, followed by the binding of ATP and association with 2 heptameric rings of the co-chaperonin Hsp10. This leads to sequestration of the substrate protein in the inner cavity of Hsp60 where, for a certain period of time, it can fold undisturbed by other cell components. Synchronous hydrolysis of ATP in all Hsp60 subunits results in the dissociation of the chaperonin rings and the release of ADP and the folded substrate protein. The polypeptide is 10 kDa heat shock protein, mitochondrial (HSPE1) (Bos taurus (Bovine)).